The primary structure comprises 522 residues: Maturase K (522 aa).

This sequence belongs to the intron maturase 2 family. MatK subfamily.

It is found in the plastid. The protein localises to the chloroplast. Usually encoded in the trnK tRNA gene intron. Probably assists in splicing its own and other chloroplast group II introns. This is Maturase K from Iris danfordiae (Danford iris).